A 222-amino-acid polypeptide reads, in one-letter code: DNA mismatch repair protein MutH (222 aa).

It belongs to the MutH family.

It is found in the cytoplasm. Its function is as follows. Sequence-specific endonuclease that cleaves unmethylated GATC sequences. It is involved in DNA mismatch repair. The polypeptide is DNA mismatch repair protein MutH (Pasteurella multocida (strain Pm70)).